The primary structure comprises 1294 residues: MAKVRAALDRITDPSVKAVLNEEAYSHIRPVLRESLTNNPYAIAPDAADTLEKYGIATNPFAVKVHSHGAVKSIENTLLERVGFNLPKEPCTFLFLKRSKLRYLRRGPSNNDIFINLAIEPRDLQRYEEDTLVESWTRITTRYAYISDTFHFFTRKMLADLFFHNPALDVLYATLVLPPEALHKHPSIEPDLYTINYNFNGFQYIPGNHGGGSYSHEFKQLEWLKVGHLKSPELCLTFQMIESIGANHLFMITRGIKITPRVRTFTKDSYVLFPQIFHPRNLNPSKPFPKVKAMQLFTYVKSVKNPTERDIYAKIRQLIKTSELSDYHPDEIVHIVNYFVFISKLDSINSYSDILSLPIWSKALLPIKTKITQLWEKLTGARAFNQLLDALQWKTFTYPLEVVDSPQPLQTRDCFIEDERLEIDTLEDEIPPNPNDNTSMSPQSIEEAVKNNPDLPWAPWLLILQAHNADCTEKQYDPENNLILPIQEINTLPKHQHPDIPTDLLTLLTKLHREPTTVSLDNHRARAYGSDVKNLRIGALLKKQSKDWLASFALKTENIEREVLMSVIHGAGGSGKSHAIQTWMRSLNRRDRHVTIILPTTDLRNDWTNKVPNLEQANFKTFEKALCQPCGKIIVFDDYSKLPQGYIEAFLAINQNVILAILTGDSKQSFHHESNEDAYTATLEPSIITYQPFCRYYLNITHRNKPDLANKLGVYSCSSGTTSFTMSSQALKGMPILSPSIMKKTALGEMGQKSMTYAGCQGLTTKAVQILLDTNTPLCSSNVIYTALSRAVDHIHFINTGPNSTDFWEKLDSTPYLKTFLDCVREEKMNEIIAAEEPPTPVQAPTTHFPKVNPTTVIESYVHDLPEKHDREIFSETHGHSNAIQTDNPVVQLFPHQQAKDETLYWATIEARLQCTSSEENLKEFHLKHDIGDILFLNYKQAMNLPQDPIPFNPDLWTLCRQEIENTYLKKSAAALVNAATRQSPDFDSHAIALFLKSQWVKKTEKIGCLKIKAGQTIAAFMQQTVMIYGTMARYMRKFRNQYCPRKIFVNCETTPADFNSFILDEWNFNRTCFSNDFTAFDQSQDGSILQFEVIKAKFHNIPEDVIEGYIQIKTHAKIFLGTLSIMRLSGEGPTFDANTEANIAYTHTKFNIPCDAAQVYAGDDMSIDYVASVKPSFNMIEHLMKLKGKPVFNTQTQGDFAEFCGWTISPKGIIKKPEKMNMSIELQKNINKFHEVKRSYALDHAFAYQLGDELHELYNENEAEHHQLATRSLILAGQATALDILDYGLRDLK.

The 166-residue stretch at 59–224 (NPFAVKVHSH…SHEFKQLEWL (166 aa)) folds into the Alphavirus-like MT domain. Residues 541–698 (LKKQSKDWLA…TYQPFCRYYL (158 aa)) enclose the (+)RNA virus helicase ATP-binding domain. Position 570–577 (570–577 (GAGGSGKS)) interacts with ATP. Residues 699–832 (NITHRNKPDL…CVREEKMNEI (134 aa)) enclose the (+)RNA virus helicase C-terminal domain. Residues 1071–1178 (RTCFSNDFTA…DYVASVKPSF (108 aa)) form the RdRp catalytic domain.

Belongs to the potexvirus/carlavirus RNA replication protein family.

It carries out the reaction RNA(n) + a ribonucleoside 5'-triphosphate = RNA(n+1) + diphosphate. It catalyses the reaction ATP + H2O = ADP + phosphate + H(+). RNA replication. The central part of this protein possibly functions as an ATP-binding helicase. The chain is RNA replication protein from Trifolium (WCMV).